We begin with the raw amino-acid sequence, 564 residues long: Kelch-like protein 12 (564 aa).

The BTB domain occupies 29–96 (CDVTLRVNLK…VYTETVHVTV (68 aa)). A BACK domain is found at 131-232 (CLGIRDFAET…LTPRYITDVI (102 aa)). Kelch repeat units lie at residues 278–325 (VLLV…SLGD), 327–375 (VYVI…TLGD), 376–422 (MIYV…VANG), 423–469 (VIYC…LLND), 471–516 (IYVV…VLRG), and 518–563 (LYAI…VLRE).

Component of the BCR(KLHL12) E3 ubiquitin ligase complex.

Its subcellular location is the cytoplasmic vesicle. The protein resides in the COPII-coated vesicle. Its pathway is protein modification; protein ubiquitination. Substrate-specific adapter of a BCR (BTB-CUL3-RBX1) E3 ubiquitin ligase complex that acts as a negative regulator of Wnt signaling pathway and ER-Golgi transport. The BCR(KLHL12) complex is involved in ER-Golgi transport by regulating the size of COPII coats, thereby playing a key role in collagen export, which is required for embryonic stem (ES) cells division. The sequence is that of Kelch-like protein 12 (klhl12) from Xenopus laevis (African clawed frog).